The primary structure comprises 227 residues: Octanoyltransferase (227 aa).

The BPL/LPL catalytic domain occupies 43-218 (ADSQDELWIV…TFTKTLGYQE (176 aa)). Substrate contacts are provided by residues 82 to 89 (RGGQVTYH), 149 to 151 (SLG), and 162 to 164 (GLA). C180 acts as the Acyl-thioester intermediate in catalysis.

It belongs to the LipB family.

It is found in the cytoplasm. It carries out the reaction octanoyl-[ACP] + L-lysyl-[protein] = N(6)-octanoyl-L-lysyl-[protein] + holo-[ACP] + H(+). It functions in the pathway protein modification; protein lipoylation via endogenous pathway; protein N(6)-(lipoyl)lysine from octanoyl-[acyl-carrier-protein]: step 1/2. Its function is as follows. Catalyzes the transfer of endogenously produced octanoic acid from octanoyl-acyl-carrier-protein onto the lipoyl domains of lipoate-dependent enzymes. Lipoyl-ACP can also act as a substrate although octanoyl-ACP is likely to be the physiological substrate. The protein is Octanoyltransferase of Shewanella denitrificans (strain OS217 / ATCC BAA-1090 / DSM 15013).